Here is a 377-residue protein sequence, read N- to C-terminus: DNA dC-&gt;dU-editing enzyme APOBEC-3G (377 aa).

The segment at 1–60 (MNPQIRNMVEQMEPDIFVYYFNNRPILSGRNTVWLCYEVKTKDPSGPPLDANIFQGKLYP) is essential for cytoplasmic localization. CMP/dCMP-type deaminase domains follow at residues 29–138 (GRNT…LRIL) and 214–327 (GQRE…LRTL). A Phosphothreonine; by PKA modification is found at Thr-32. His-65, Cys-97, and Cys-100 together coordinate Zn(2+). The necessary for homooligomerization stretch occupies residues 209–335 (KPWVSGQRET…TLHRDGAKIA (127 aa)). The segment at 213 to 215 (SGQ) is interaction with DNA. The residue at position 218 (Thr-218) is a Phosphothreonine; by PKA and CAMK2. Residue His-257 coordinates Zn(2+). The active-site Proton donor is the Glu-259. Residues Cys-287 and Cys-290 each contribute to the Zn(2+) site. The interval 312–319 (RIYDDQGR) is interaction with DNA.

This sequence belongs to the cytidine and deoxycytidylate deaminase family. As to quaternary structure, homodimer. Homooligomer. Can bind RNA to form ribonucleoprotein complexes of high-molecular-mass (HMM) or low-molecular-mass (LMM). HMM is inactive and heterogeneous in protein composition because of binding nonselectively to cellular RNAs, which in turn are associated with variety of cellular proteins. The LMM form which is enzymatically active has few or no RNAs associated. Its ability to form homooligomer is distinct from its ability to assemble into HMM. Interacts with APOBEC3B, APOBEC3F, MOV10, AGO2, EIF4E, EIF4ENIF1, DCP2 and DDX6 in an RNA-dependent manner. Interacts with AGO1, AGO3 and PKA/PRKACA. Zn(2+) serves as cofactor.

Its subcellular location is the cytoplasm. It is found in the nucleus. The protein resides in the P-body. It carries out the reaction a 2'-deoxycytidine in single-stranded DNA + H2O + H(+) = a 2'-deoxyuridine in single-stranded DNA + NH4(+). Its function is as follows. DNA deaminase (cytidine deaminase) which acts as an inhibitor of retrovirus replication and retrotransposon mobility via deaminase-dependent and -independent mechanisms. Exhibits antiviral activity against vif-deficient: HIV-1 and simian immunodeficiency viruses (SIVs) and also simian foamy virus (SFV). After the penetration of retroviral nucleocapsids into target cells of infection and the initiation of reverse transcription, it can induce the conversion of cytosine to uracil in the minus-sense single-strand viral DNA, leading to G-to-A hypermutations in the subsequent plus-strand viral DNA. The resultant detrimental levels of mutations in the proviral genome, along with a deamination-independent mechanism that works prior to the proviral integration, together exert efficient antiretroviral effects in infected target cells. Selectively targets single-stranded DNA and does not deaminate double-stranded DNA or single- or double-stranded RNA. May inhibit the mobility of LTR retrotransposons. This is DNA dC-&gt;dU-editing enzyme APOBEC-3G (APOBEC3G) from Chlorocebus aethiops (Green monkey).